A 114-amino-acid polypeptide reads, in one-letter code: UPF0342 protein NWMN_1737 (114 aa).

The protein belongs to the UPF0342 family.

The protein is UPF0342 protein NWMN_1737 of Staphylococcus aureus (strain Newman).